Here is a 359-residue protein sequence, read N- to C-terminus: Cytoplasmic tRNA 2-thiolation protein 1 (359 aa).

Belongs to the TtcA family. CTU1/NCS6/ATPBD3 subfamily. Interacts with NCS2 and URM1. May act by forming a heterodimer with NCS2. Component of a large molecular weight complex of more than 250 kDa.

Its subcellular location is the cytoplasm. The protein resides in the mitochondrion. Its pathway is tRNA modification; 5-methoxycarbonylmethyl-2-thiouridine-tRNA biosynthesis. Plays a central role in 2-thiolation of mcm(5)S(2)U at tRNA wobble positions of tRNA(Lys), tRNA(Glu) and tRNA(Gln). Directly binds tRNAs and probably acts by catalyzing adenylation of tRNAs, an intermediate required for 2-thiolation. It is unclear whether it acts as a sulfurtransferase that transfers sulfur from thiocarboxylated URM1 onto the uridine of tRNAs at wobble position. Prior mcm(5) tRNA modification by the elongator complex is required for 2-thiolation. May also be involved in protein urmylation. The protein is Cytoplasmic tRNA 2-thiolation protein 1 of Saccharomyces cerevisiae (strain RM11-1a) (Baker's yeast).